Reading from the N-terminus, the 370-residue chain is tRNA-specific 2-thiouridylase MnmA (370 aa).

ATP contacts are provided by residues 14–21 (GMSGGVDS) and Met40. An interaction with target base in tRNA region spans residues 100-102 (NPD). Catalysis depends on Cys105, which acts as the Nucleophile. The cysteines at positions 105 and 205 are disulfide-linked. Gly129 is a binding site for ATP. The segment at 155–157 (KDQ) is interaction with tRNA. The active-site Cysteine persulfide intermediate is Cys205. The tract at residues 321–322 (RY) is interaction with tRNA.

It belongs to the MnmA/TRMU family.

The protein localises to the cytoplasm. It catalyses the reaction S-sulfanyl-L-cysteinyl-[protein] + uridine(34) in tRNA + AH2 + ATP = 2-thiouridine(34) in tRNA + L-cysteinyl-[protein] + A + AMP + diphosphate + H(+). Catalyzes the 2-thiolation of uridine at the wobble position (U34) of tRNA, leading to the formation of s(2)U34. The sequence is that of tRNA-specific 2-thiouridylase MnmA from Bordetella avium (strain 197N).